Consider the following 509-residue polypeptide: DEAD-box ATP-dependent RNA helicase CshA (509 aa).

Residues 2 to 30 (QNFKELGISDKTVQTLEAMGFKEPTPIQK) carry the Q motif motif. Positions 33-203 (IPYALEGDDI…QQFMKAPKII (171 aa)) constitute a Helicase ATP-binding domain. An ATP-binding site is contributed by 46–53 (AQTGTGKT). The short motif at 150 to 153 (DEAD) is the DEAD box element. The Helicase C-terminal domain occupies 214 to 375 (QIDEYYTIVK…LRPPHRKEVL (162 aa)). 2 stretches are compositionally biased toward basic residues: residues 440–459 (ARKN…KRGN) and 467–482 (RRSK…KKNQ). The disordered stretch occupies residues 440 to 509 (ARKNRSSKGG…KGRTFADHQK (70 aa)). Positions 483–492 (KKFDRRDKQQ) are enriched in basic and acidic residues.

This sequence belongs to the DEAD box helicase family. CshA subfamily. As to quaternary structure, oligomerizes, may be a member of the RNA degradosome.

The protein resides in the cytoplasm. The catalysed reaction is ATP + H2O = ADP + phosphate + H(+). Its function is as follows. DEAD-box RNA helicase possibly involved in RNA degradation. Unwinds dsRNA in both 5'- and 3'-directions, has RNA-dependent ATPase activity. This chain is DEAD-box ATP-dependent RNA helicase CshA, found in Staphylococcus epidermidis (strain ATCC 35984 / DSM 28319 / BCRC 17069 / CCUG 31568 / BM 3577 / RP62A).